A 173-amino-acid chain; its full sequence is Photosystem I assembly protein Ycf3 (173 aa).

3 TPR repeats span residues 35–68 (AFSY…EEDP), 72–105 (SYIL…NFKL), and 120–153 (GVQA…APDN).

The protein belongs to the Ycf3 family.

It localises to the plastid. It is found in the chloroplast thylakoid membrane. Functionally, essential for the assembly of the photosystem I (PSI) complex. May act as a chaperone-like factor to guide the assembly of the PSI subunits. The protein is Photosystem I assembly protein Ycf3 of Pyropia yezoensis (Susabi-nori).